We begin with the raw amino-acid sequence, 99 residues long: Biogenesis of lysosome-related organelles complex 1 subunit SNN1 (99 aa).

Positions 34-94 form a coiled coil; the sequence is SINELRESQA…VVLKRYEKMV (61 aa).

It belongs to the SNAPIN family. Component of the biogenesis of lysosome-related organelles complex-1 (BLOC-1).

It is found in the endosome. In terms of biological role, component of the biogenesis of lysosome-related organelles complex-1 (BLOC-1), a complex involved in endosomal cargo sorting. The polypeptide is Biogenesis of lysosome-related organelles complex 1 subunit SNN1 (SNN1) (Kluyveromyces lactis (strain ATCC 8585 / CBS 2359 / DSM 70799 / NBRC 1267 / NRRL Y-1140 / WM37) (Yeast)).